A 287-amino-acid polypeptide reads, in one-letter code: MNIQEYFSRISFDGSHKDADLQTLTAIFQHHIQAIPFENLSMHCGETIDLDLQATYNKIVKKKRGGWCMETNYLLFWALKEMGYDICVLGGNSYEPAKKAYTDEINHILLKVVIKGSSYIVDAGFGGGPYQTWLPMLLISGKDQPQIPGIFRFIEDNGIWYLEKVKRKHYVPEGSVPLTDNPEMGNIRKLYSFTLEPKHIDDFQELNAYLQVAPDTILQKKSICSLQTTDGFYALVGWTFSEMKYKYKEDADLLQTTTLTDEEVEKTLKDKFNIVLENKLIPVNVRG.

Cys-68 acts as the Acyl-thioester intermediate in catalysis. Catalysis depends on residues His-107 and Asp-122.

Belongs to the arylamine N-acetyltransferase family.

The catalysed reaction is an arylamine + acetyl-CoA = an N-acetylarylamine + CoA. This is Arylamine N-acetyltransferase, liver isozyme from Gallus gallus (Chicken).